The following is a 466-amino-acid chain: Tyrosinase HcTyr1 (466 aa).

Residues histidine 43, histidine 78, histidine 87, histidine 211, histidine 215, and histidine 238 each contribute to the Cu cation site.

It belongs to the tyrosinase family. As to quaternary structure, monomer. Formation of a dimer is observed when the protein is in its holo-form. Cu(2+) is required as a cofactor. In terms of processing, in vitro, the C-terminal lid-domain is slowly cleaved off in an autoprocessive time dependent manner, leading to the formation of cleaved-HcTyr1. The processing rate is not influenced by factors such as pH and added metal ions.

The catalysed reaction is L-tyrosine + O2 = L-dopaquinone + H2O. It catalyses the reaction 2 L-tyrosine + O2 = 2 L-dopa. It carries out the reaction 2 L-dopa + O2 = 2 L-dopaquinone + 2 H2O. Its activity is regulated as follows. Cleavage of the lid-domain increases activity levels, affinity for substrate and turnover rate. Exhibits high saline tolerance. Copper-containing oxidase that catalyzes the conversion of L-tyrosine to L-dopa and then to L-dopaquinone. Can use various phenols such as p-coumaric acid, phenol, pyrocatechol, syringol or pyrogallol. Accepts several of the constituents of lignin and potentially participates in lignin functionalization. This chain is Tyrosinase HcTyr1, found in Hahella sp. (strain CCB-MM4).